A 154-amino-acid chain; its full sequence is MGLSDGEWQLVLNVWGKVEADLAGHGQDVLIRLFKGHPETLEKFDKFKHLKTEADMKASEDLKKHGNTVLTALGAILKKKGHHDAELKPLAQSHATKHKIPIKYLEFISEAIIHVLHSRHPAEFGADAQAAMNKALELFRKDIATKYKELGFHG.

One can recognise a Globin domain in the interval 2–148; sequence GLSDGEWQLV…FRKDIATKYK (147 aa). Nitrite is bound at residue histidine 65. Residue histidine 65 coordinates O2. Histidine 94 provides a ligand contact to heme b.

It belongs to the globin family. Monomeric.

Its subcellular location is the cytoplasm. The protein localises to the sarcoplasm. It catalyses the reaction Fe(III)-heme b-[protein] + nitric oxide + H2O = Fe(II)-heme b-[protein] + nitrite + 2 H(+). The catalysed reaction is H2O2 + AH2 = A + 2 H2O. Monomeric heme protein which primary function is to store oxygen and facilitate its diffusion within muscle tissues. Reversibly binds oxygen through a pentacoordinated heme iron and enables its timely and efficient release as needed during periods of heightened demand. Depending on the oxidative conditions of tissues and cells, and in addition to its ability to bind oxygen, it also has a nitrite reductase activity whereby it regulates the production of bioactive nitric oxide. Under stress conditions, like hypoxia and anoxia, it also protects cells against reactive oxygen species thanks to its pseudoperoxidase activity. This chain is Myoglobin-2 (MB2), found in Stenella attenuata (Pantropical spotted dolphin).